A 226-amino-acid chain; its full sequence is Histone H1.5 (226 aa).

Residues 1-16 (MSETAPAETATPAPVE) show a composition bias toward low complexity. Positions 1–44 (MSETAPAETATPAPVEKSPAKKKATKKAAGAGAAKRKATGPPVS) are disordered. Position 2 is an N-acetylserine; partial (S2). Position 2 is a phosphoserine (S2). A Phosphothreonine; by GSK3 modification is found at T11. An N6-acetyllysine modification is found at K17. S18 carries the phosphoserine modification. K27 is subject to N6-methyllysine. K37 is modified (N6-(beta-hydroxybutyryl)lysine; alternate). An N6-succinyllysine; alternate modification is found at K37. T39 carries the post-translational modification Phosphothreonine. The H15 domain occupies 39-112 (TGPPVSELIT…GASGSFKLNK (74 aa)). At K49 the chain carries N6-acetyllysine. K55 carries the post-translational modification N6-(beta-hydroxybutyryl)lysine. R57 bears the Citrulline mark. K67 is modified (N6-(beta-hydroxybutyryl)lysine). At K78 the chain carries N6-acetyllysine. N6-(beta-hydroxybutyryl)lysine is present on residues K88, K93, and K109. Residues 98-226 (QTKGTGASGS…KAKKAAAKKK (129 aa)) are disordered. Positions 122-133 (KAKKAGAAKAKK) are enriched in basic residues. A phosphothreonine mark is found at T138 and T155. Residues 140–161 (KKAKKAAGAKKAVKKTPKKAKK) are compositionally biased toward basic residues. K168 bears the N6-acetyllysine mark. The span at 169–187 (KVAKSPKKAKAAAKPKKAT) shows a compositional bias: basic residues. 2 positions are modified to phosphoserine: S173 and S189. The segment covering 194-226 (KAVKPKAAKPKAAKPKAAKPKAAKAKKAAAKKK) has biased composition (basic residues).

The protein belongs to the histone H1/H5 family. In terms of assembly, interacts with MSX1. H1 histones are progressively phosphorylated during the cell cycle, becoming maximally phosphorylated during late G2 phase and M phase, and being dephosphorylated sharply thereafter. Phosphorylated at Thr-11 by GSK3B during mitosis in prometaphase and dephosphorylated in telophase. In terms of processing, citrullination at Arg-57 (H1R54ci) by PADI4 takes place within the DNA-binding site of H1 and results in its displacement from chromatin and global chromatin decondensation, thereby promoting pluripotency and stem cell maintenance. Ubiquitous. Expressed in the majority of the cell lines tested and in testis.

The protein localises to the nucleus. Its subcellular location is the chromosome. In terms of biological role, histone H1 protein binds to linker DNA between nucleosomes forming the macromolecular structure known as the chromatin fiber. Histones H1 are necessary for the condensation of nucleosome chains into higher-order structured fibers. Also acts as a regulator of individual gene transcription through chromatin remodeling, nucleosome spacing and DNA methylation. This is Histone H1.5 from Homo sapiens (Human).